The following is a 429-amino-acid chain: 26S proteasome regulatory subunit RPN7 (429 aa).

Serine 8 and serine 77 each carry phosphoserine. A TPR repeat occupies 131–164 (AQAWINLGEYYAQIGDKDNAEKTLGKSLSKAIST). In terms of domain architecture, PCI spans 223–395 (NFKEAAKLLV…GIVETNRPDN (173 aa)).

In terms of assembly, the 26S proteasome is composed of a core protease, known as the 20S proteasome, capped at one or both ends by the 19S regulatory complex (RC). The RC is composed of at least 18 different subunits in two subcomplexes, the base and the lid, which form the portions proximal and distal to the 20S proteolytic core, respectively. Component of the lid subcomplex of the 19S RC.

The protein localises to the nucleus. In terms of biological role, component of the 19S cap proteasome complex which acts as a regulatory subunit of the 26S proteasome, involved in the ATP-dependent degradation of ubiquitinated proteins. The sequence is that of 26S proteasome regulatory subunit RPN7 from Saccharomyces cerevisiae (strain ATCC 204508 / S288c) (Baker's yeast).